We begin with the raw amino-acid sequence, 380 residues long: uncharacterized protein (380 aa).

The N-terminal stretch at 1 to 18 (MALRHLALLAGLLVGVAS) is a signal peptide. 3 N-linked (GlcNAc...) asparagine glycosylation sites follow: Asn-104, Asn-111, and Asn-128. The chain crosses the membrane as a helical span at residues 148–168 (LFLGTFFISSGLILSVAGFFY). 2 disordered regions span residues 229–256 (PQTG…QGQG) and 336–380 (RFSG…ISNV). Pro residues predominate over residues 240 to 249 (PPLPGSPGDP). Residues 356 to 366 (VRRERPLDRAT) show a composition bias toward basic and acidic residues.

Its subcellular location is the membrane. This is an uncharacterized protein from Homo sapiens (Human).